Reading from the N-terminus, the 198-residue chain is Recombination protein RecR (198 aa).

Residues 57–72 form a C4-type zinc finger; it reads CSICGNLTDEDPCAIC. Positions 80–175 constitute a Toprim domain; sequence STILIVEDSR…KVTRLARGLA (96 aa).

Belongs to the RecR family.

Functionally, may play a role in DNA repair. It seems to be involved in an RecBC-independent recombinational process of DNA repair. It may act with RecF and RecO. In Streptococcus gordonii (strain Challis / ATCC 35105 / BCRC 15272 / CH1 / DL1 / V288), this protein is Recombination protein RecR.